We begin with the raw amino-acid sequence, 223 residues long: UPF0319 protein VPA1584 (223 aa).

The first 21 residues, 1-21, serve as a signal peptide directing secretion; the sequence is MKLIKPLTCALALAMSGMAFA.

It belongs to the UPF0319 family.

In Vibrio parahaemolyticus serotype O3:K6 (strain RIMD 2210633), this protein is UPF0319 protein VPA1584.